The primary structure comprises 358 residues: uncharacterized protein (358 aa).

Residues C39, H61, C92, C95, C98, C106, and D157 each contribute to the Zn(2+) site.

This sequence belongs to the zinc-containing alcohol dehydrogenase family. Requires Zn(2+) as cofactor.

This is an uncharacterized protein from Escherichia coli (strain K12).